Consider the following 582-residue polypeptide: Aspartate--tRNA(Asp/Asn) ligase (582 aa).

Residue Glu177 participates in L-aspartate binding. The segment at 201–204 is aspartate; sequence QLFK. Arg223 provides a ligand contact to L-aspartate. ATP-binding positions include 223-225 and Gln232; that span reads RDE. His447 contacts L-aspartate. Residue Glu481 participates in ATP binding. Arg488 provides a ligand contact to L-aspartate. Residue 533–536 participates in ATP binding; that stretch reads GLDR.

It belongs to the class-II aminoacyl-tRNA synthetase family. Type 1 subfamily. Homodimer.

The protein resides in the cytoplasm. It catalyses the reaction tRNA(Asx) + L-aspartate + ATP = L-aspartyl-tRNA(Asx) + AMP + diphosphate. In terms of biological role, aspartyl-tRNA synthetase with relaxed tRNA specificity since it is able to aspartylate not only its cognate tRNA(Asp) but also tRNA(Asn). Reaction proceeds in two steps: L-aspartate is first activated by ATP to form Asp-AMP and then transferred to the acceptor end of tRNA(Asp/Asn). This is Aspartate--tRNA(Asp/Asn) ligase from Chlamydia trachomatis serovar L2 (strain ATCC VR-902B / DSM 19102 / 434/Bu).